The sequence spans 1043 residues: Isoleucine--tRNA ligase (1043 aa).

The 'HIGH' region motif lies at 49–59 (PFATGLPHYGH). The short motif at 592-596 (KMSKR) is the 'KMSKS' region element. Residue Lys595 coordinates ATP.

Belongs to the class-I aminoacyl-tRNA synthetase family. IleS type 2 subfamily. Monomer. Requires Zn(2+) as cofactor.

It is found in the cytoplasm. It catalyses the reaction tRNA(Ile) + L-isoleucine + ATP = L-isoleucyl-tRNA(Ile) + AMP + diphosphate. Catalyzes the attachment of isoleucine to tRNA(Ile). As IleRS can inadvertently accommodate and process structurally similar amino acids such as valine, to avoid such errors it has two additional distinct tRNA(Ile)-dependent editing activities. One activity is designated as 'pretransfer' editing and involves the hydrolysis of activated Val-AMP. The other activity is designated 'posttransfer' editing and involves deacylation of mischarged Val-tRNA(Ile). The chain is Isoleucine--tRNA ligase from Chlamydia caviae (strain ATCC VR-813 / DSM 19441 / 03DC25 / GPIC) (Chlamydophila caviae).